The chain runs to 266 residues: Integral membrane protein 2B (266 aa).

Topologically, residues 1–54 (MVKVTFNSALAQKEAKKDEPKSSEEALIAPPDAVAVDCKDPDDVVPVGQRRAWC) are cytoplasmic. The helical; Signal-anchor for type II membrane protein transmembrane segment at 55-75 (WCMCFGLAFMLAGVILGGAYL) threads the bilayer. Residues 76-266 (YKYFALQPDD…KFAVETLICS (191 aa)) lie on the Lumenal side of the membrane. Residues 102–134 (EPSADAPAARYQTIEENIKIFEEDAVEFISVPV) are necessary for interaction with APP and inhibitor effects on APP processing. One can recognise a BRICHOS domain in the interval 137–231 (FADSDPANIV…LCHDKETYKL (95 aa)). Cystine bridges form between Cys164–Cys223 and Cys248–Cys265. A glycan (N-linked (GlcNAc...) asparagine) is linked at Asn170.

The protein belongs to the ITM2 family. In terms of assembly, homodimer; disulfide-linked. Interacts with SPPL2A and SPPL2B. Interacts with APP. Mature BRI2 (mBRI2) interacts with the APP amyloid-beta A4 protein; the interaction occurs at the cell surface and in the endocytic compartments and enable alpha- and beta-secretase-induced APP cleavage inhibition. Mature BRI2 (mBRI2) interacts with the APP C99; the interaction occurs in the endocytic compartments and enable gamma-secretase-induced C99 cleavage inhibition. May form heterodimers with Bri23 peptide and APP amyloid-beta protein 40. Interacts with ADAM7 in sperm; the interaction increases following capacitation. In terms of processing, the ectodomain C-terminal part of the imBRI2 is processed by furin producing a secreted Bri23 peptide and a mature BRI2, membrane form (mBRI2). The remaining part of the ectodomain of mBRI2 containing the BRICHOS domain is cleaved by ADAM10 and is secreted (BRI2C, soluble form). The membrane-bound N-terminal fragment (BRI2C, membrane form) is further proteolytically processed by SPPL2A and SPPL2B through regulated intramembrane proteolysis producing a secreted C-peptide and a BRI2 intracellular domain (BRI2 ICD) released in the cytosol. Shedding by ADAM10 facilitates intramembrane cleavage but is not absolutely required for BRI2 ICD generation. Post-translationally, glycosylation at Asn-170 is important for cell surface localization, but doesn't affect furin- and ADAM10-induced proteolytic processing.

It localises to the golgi apparatus membrane. It is found in the cell membrane. The protein resides in the endosome membrane. The protein localises to the secreted. Functionally, plays a regulatory role in the processing of the amyloid-beta A4 precursor protein (APP) and acts as an inhibitor of the amyloid-beta peptide aggregation and fibrils deposition. Plays a role in the induction of neurite outgrowth. Functions as a protease inhibitor by blocking access of secretases to APP cleavage sites. Its function is as follows. Mature BRI2 (mBRI2) functions as a modulator of the amyloid-beta A4 precursor protein (APP) processing leading to a strong reduction in the secretion of secretase-processed amyloid-beta protein 40 and amyloid-beta protein 42. In terms of biological role, bri23 peptide prevents aggregation of APP amyloid-beta protein 42 into toxic oligomers. This Rattus norvegicus (Rat) protein is Integral membrane protein 2B (Itm2b).